The sequence spans 326 residues: Probable cell division protein WhiA (326 aa).

A DNA-binding region (H-T-H motif) is located at residues 275–308 (SLEELGQLADPPLTKDAIAGRIRRLLAMADKRAA).

The protein belongs to the WhiA family.

Its function is as follows. Involved in cell division and chromosome segregation. This is Probable cell division protein WhiA from Thermobifida fusca (strain YX).